We begin with the raw amino-acid sequence, 264 residues long: Short chain dehydrogenase/reductase AacuN (264 aa).

Positions 24, 70, 97, and 130 each coordinate NADP(+). Catalysis depends on proton donor residues serine 146, serine 147, and tyrosine 161. NADP(+) contacts are provided by tyrosine 161, lysine 165, and threonine 196. The active-site Lowers pKa of active site Tyr is the lysine 165.

It belongs to the short-chain dehydrogenases/reductases (SDR) family.

It carries out the reaction 3,8,9,10-tetrahydroxy-6-methyl-1,4-dihydroanthracen-1-one + NADPH + H(+) = (3R)-3,8,9,10-tetrahydroxy-6-methyl-1,2,3,4-tetrahydroanthracen-1-one + NADP(+). It functions in the pathway secondary metabolite biosynthesis. Its function is as follows. Atrochrysone carboxylic acid synthase; part of the gene cluster that mediates the biosynthesis of the tetrahydroxanthone dimer secalonic acid D. The pathway begins with the synthesis of atrochrysone thioester by the polyketide synthase AacuL. The atrochrysone carboxyl ACP thioesterase AacuM then breaks the thioester bond and releases the atrochrysone carboxylic acid from AacuL. Atrochrysone carboxylic acid is decarboxylated by the decarboxylase AacuI, and oxidized by the anthrone oxygenase AacuG to yield emodin. Emodin is then reduced to emodin hydroquinone by a yet unidentified oxidoreductase. A-ring reduction by the short chain dehydrogenase AacuN, dehydration by the scytalone dehydratase-like protein AacuK and probable spontaneous re-oxidation, results in overall deoxygenation to chrysophanol. Baeyer-Villiger oxidation by the Baeyer-Villiger monooxygenase (BVMO) AacuH then yields monodictyphenone. Monodictyphenone is transformed into compounds with the tetrahydroxanthone skeleton via methylesterification by the methyltransferase AacuQ, followed by the action of the flavin-dependent monooxygenase AacuC, the isomerase AacuP, and the short chain dehydrogenase/reductase AacuF or AacuD. AacuF and AacuD should accept the same compound as a substrate but perform the ketoreduction with a different stereoselectivity, thus yielding blennolides B and A, respectively. In the final step of the biosynthesis, the cytochrome P450 monooxygenase AacuE accepts blennolide B and/or blennolide A to conduct the dimerization reaction to furnish the tetrahydroxanthone dimers, secalonic acids D, B, and F. The chain is Short chain dehydrogenase/reductase AacuN from Aspergillus aculeatus (strain ATCC 16872 / CBS 172.66 / WB 5094).